A 510-amino-acid chain; its full sequence is Maturase K (510 aa).

The protein belongs to the intron maturase 2 family. MatK subfamily.

The protein localises to the plastid. It is found in the chloroplast. In terms of biological role, usually encoded in the trnK tRNA gene intron. Probably assists in splicing its own and other chloroplast group II introns. This Populus alba (White poplar) protein is Maturase K.